The chain runs to 278 residues: Shikimate dehydrogenase (NADP(+)) (278 aa).

Shikimate-binding positions include 23–25 (SRS) and threonine 70. Catalysis depends on lysine 74, which acts as the Proton acceptor. An NADP(+)-binding site is contributed by glutamate 86. Shikimate is bound by residues asparagine 95 and aspartate 110. Residues 135–139 (GAGGA), 159–164 (NRTKEK), and methionine 224 each bind NADP(+). Residue tyrosine 226 coordinates shikimate. Glycine 248 lines the NADP(+) pocket.

It belongs to the shikimate dehydrogenase family. As to quaternary structure, homodimer.

The enzyme catalyses shikimate + NADP(+) = 3-dehydroshikimate + NADPH + H(+). Its pathway is metabolic intermediate biosynthesis; chorismate biosynthesis; chorismate from D-erythrose 4-phosphate and phosphoenolpyruvate: step 4/7. In terms of biological role, involved in the biosynthesis of the chorismate, which leads to the biosynthesis of aromatic amino acids. Catalyzes the reversible NADPH linked reduction of 3-dehydroshikimate (DHSA) to yield shikimate (SA). The protein is Shikimate dehydrogenase (NADP(+)) of Alcanivorax borkumensis (strain ATCC 700651 / DSM 11573 / NCIMB 13689 / SK2).